An 86-amino-acid chain; its full sequence is MRLFLSLPVLVVVLLMILEGPGPAQGAPESVEASSGLDKLKEFGNNLEDKVREFFKRIKESDIPAKTRNWFSETLQKVKEKLRIES.

The first 26 residues, 1-26 (MRLFLSLPVLVVVLLMILEGPGPAQG), serve as a signal peptide directing secretion.

The protein belongs to the apolipoprotein C1 family.

The protein resides in the secreted. Functionally, inhibitor of lipoprotein binding to the low density lipoprotein (LDL) receptor, LDL receptor-related protein, and very low density lipoprotein (VLDL) receptor. Associates with high density lipoproteins (HDL) and the triacylglycerol-rich lipoproteins in the plasma and makes up about 10% of the protein of the VLDL and 2% of that of HDL. Appears to interfere directly with fatty acid uptake and is also the major plasma inhibitor of cholesteryl ester transfer protein (CETP). Binds free fatty acids and reduces their intracellular esterification. Modulates the interaction of APOE with beta-migrating VLDL and inhibits binding of beta-VLDL to the LDL receptor-related protein. In Saimiri boliviensis boliviensis (Bolivian squirrel monkey), this protein is Apolipoprotein C-I (APOC1).